The chain runs to 238 residues: MNNVKLLIAGSAFFAMSAQAADRVSIDVKVTLEAAACTPILSNGGVVNFGSHSVNRLSTQHYTQIGTRNINMTITCESATGIAITARDTRMDSMTTGKDSGGQSGVKYTLNGGGYISQTTRLFGLGKTKDNKNIGSYAVLIDSNNISASNGSQTLAVSIAGADAVITGQKRAWQTLTAYPLAVDQSYYYTFVKPGETTPTPVTNAIIPLQVSASIANDLGGSEKIELDGKAVISVVYL.

A signal peptide spans 1–20 (MNNVKLLIAGSAFFAMSAQA).

To E.coli GltF.

This is an uncharacterized protein from Escherichia coli (strain K12).